We begin with the raw amino-acid sequence, 267 residues long: Small ribosomal subunit protein uS2 (267 aa).

A disordered region spans residues 237 to 267; the sequence is IGESAAAPSEPALETASAEATAEGEQPGSQA. The segment covering 238 to 261 has biased composition (low complexity); that stretch reads GESAAAPSEPALETASAEATAEGE.

It belongs to the universal ribosomal protein uS2 family.

The protein is Small ribosomal subunit protein uS2 of Chelativorans sp. (strain BNC1).